A 386-amino-acid chain; its full sequence is Alanine racemase (386 aa).

The active-site Proton acceptor; specific for D-alanine is lysine 38. The residue at position 38 (lysine 38) is an N6-(pyridoxal phosphate)lysine. Residue arginine 136 coordinates substrate. The active-site Proton acceptor; specific for L-alanine is the tyrosine 267. Residue methionine 315 coordinates substrate.

The protein belongs to the alanine racemase family. Pyridoxal 5'-phosphate serves as cofactor.

It catalyses the reaction L-alanine = D-alanine. The protein operates within amino-acid biosynthesis; D-alanine biosynthesis; D-alanine from L-alanine: step 1/1. Its function is as follows. Catalyzes the interconversion of L-alanine and D-alanine. May also act on other amino acids. In Clostridium perfringens (strain SM101 / Type A), this protein is Alanine racemase (alr).